The primary structure comprises 474 residues: MIASVVTRFAPSPTGFLHIGGARTALFNWLYARKHGGKMLLRIEDTDRARSTTAAIEAILDGLKWLGIDWDDDVVYQFSRVARHRDIAEQLLAEGKAYRCYATPEELAEMREKARAEGRAKLYDGRWRDRDPSEAPPDLKPTIRLKAPLSGETVIEDQVQGRVVWQNENLDDLVLLRGDGTPTYMLAVVVDDHDMGVTHIIRGDDHLINAARQKQIYDTLGWALPTMAHIPLIHGPDGSKLSKRHGALGVDAYRAMGYLPAALRNYLVRLGWSHGDQEIFSTQEMIDAFDLSAIGRSAARFDFAKLENLNGHYIRNCDDHVLVDLFQDALDYVPRGADLKPKLNDATRAQLLRAMPGLKERAKTLIELIDSARFIFADRPLTLDAKAIPLLTSETRALIGRLRTTLETVTSWSAQTTEAAMRTFAEQNNLKLGAIAQPLRIALTGRTTSPGIFDVLAVLGKETCLARLDDQSSP.

Positions 11-21 (PSPTGFLHIGG) match the 'HIGH' region motif. The 'KMSKS' region motif lies at 240–244 (KLSKR). Lys-243 provides a ligand contact to ATP.

This sequence belongs to the class-I aminoacyl-tRNA synthetase family. Glutamate--tRNA ligase type 1 subfamily. As to quaternary structure, monomer.

The protein resides in the cytoplasm. The catalysed reaction is tRNA(Glu) + L-glutamate + ATP = L-glutamyl-tRNA(Glu) + AMP + diphosphate. Catalyzes the attachment of glutamate to tRNA(Glu) in a two-step reaction: glutamate is first activated by ATP to form Glu-AMP and then transferred to the acceptor end of tRNA(Glu). This is Glutamate--tRNA ligase from Nitrobacter hamburgensis (strain DSM 10229 / NCIMB 13809 / X14).